We begin with the raw amino-acid sequence, 433 residues long: Mitochondrial inner membrane magnesium transporter MIT1 (433 aa).

A coiled-coil region spans residues 257–298 (TNKLLRDMMKIKNNLQKLSNLLNALRTNIEKILNNENDMKNM). Residues 360–380 (FILLNAKISFSTLLFSISSVV) traverse the membrane as a helical segment. Over 381–396 (TSLFGMNLKNFVEDSN) the chain is Extracellular. Residues 397–417 (YAFIIVSIFVSVWSIIGIYVT) traverse the membrane as a helical segment. Residues 418-433 (KNINTLLKFFDRYNFR) lie on the Mitochondrial matrix side of the membrane.

Belongs to the CorA metal ion transporter (MIT) (TC 1.A.35) family.

It is found in the mitochondrion inner membrane. Its function is as follows. Mitochondrial inner membrane magnesium transporter required for mitochondrial magnesium homeostasis. Involved in the development of the sporozoite in the mosquito vector midgut. The protein is Mitochondrial inner membrane magnesium transporter MIT1 of Plasmodium berghei (strain Anka).